The primary structure comprises 135 residues: Large ribosomal subunit protein eL27z (135 aa).

The protein belongs to the eukaryotic ribosomal protein eL27 family.

In Arabidopsis thaliana (Mouse-ear cress), this protein is Large ribosomal subunit protein eL27z (RPL27A).